The chain runs to 208 residues: Protein-L-isoaspartate O-methyltransferase (208 aa).

S59 is an active-site residue.

Belongs to the methyltransferase superfamily. L-isoaspartyl/D-aspartyl protein methyltransferase family.

It is found in the cytoplasm. The catalysed reaction is [protein]-L-isoaspartate + S-adenosyl-L-methionine = [protein]-L-isoaspartate alpha-methyl ester + S-adenosyl-L-homocysteine. In terms of biological role, catalyzes the methyl esterification of L-isoaspartyl residues in peptides and proteins that result from spontaneous decomposition of normal L-aspartyl and L-asparaginyl residues. It plays a role in the repair and/or degradation of damaged proteins. The sequence is that of Protein-L-isoaspartate O-methyltransferase from Klebsiella pneumoniae (strain 342).